We begin with the raw amino-acid sequence, 569 residues long: Phosphoglucomutase 2 (569 aa).

Residues 1-23 (MSFQIETVPTKPYEDQKPGTSGL) form a disordered region. N-acetylserine is present on S2. Position 24 (R24) interacts with alpha-D-glucose 1,6-bisphosphate. A phosphothreonine mark is found at T111 and T117. S119 lines the alpha-D-glucose 1,6-bisphosphate pocket. The Phosphoserine intermediate role is filled by S119. Residues S119, D290, D292, and D294 each contribute to the Mg(2+) site. S119 is subject to Phosphoserine. D294, R295, T359, E378, S380, and K391 together coordinate alpha-D-glucose 1,6-bisphosphate.

This sequence belongs to the phosphohexose mutase family. Monomer. Requires Mg(2+) as cofactor. Zn(2+) serves as cofactor. In terms of processing, O-glycosylated with mannose residues. Substrate of UDP-glucose--glycoprotein glucose phosphotransferase, linking glucose in a phosphodiester linkage to O-linked mannose.

The protein resides in the cytoplasm. It carries out the reaction alpha-D-glucose 1-phosphate = alpha-D-glucose 6-phosphate. The catalysed reaction is O-phospho-L-seryl-[protein] + alpha-D-glucose 1-phosphate = alpha-D-glucose 1,6-bisphosphate + L-seryl-[protein]. It catalyses the reaction alpha-D-glucose 1,6-bisphosphate + L-seryl-[protein] = O-phospho-L-seryl-[protein] + alpha-D-glucose 6-phosphate. Functionally, major phosphoglucomutase isozyme that catalyzes the reversible isomerization of alpha-D-glucose 1-phosphate to alpha-D-glucose 6-phosphate. The mechanism proceeds via the intermediate compound alpha-D-glucose 1,6-bisphosphate. Constitutes about 80-90% of the phosphoglucomutase activity in the cell. Key enzyme in hexose metabolism. The forward reaction is an essential step in the energy metabolism of galactose since the product of the galactose pathway enzymes in yeast is glucose 1-phosphate. The reverse reaction is an essential step for biosynthesis when carbon sources other than galactose are the energy source because glucose 1-phosphate is the starting point for the synthesis of UDP-glucose, which acts as a precursor for the synthesis of oligosaccharides and trehalose. This Saccharomyces cerevisiae (strain ATCC 204508 / S288c) (Baker's yeast) protein is Phosphoglucomutase 2.